The following is an 831-amino-acid chain: MKQNLISSVQIILLLPLTTVGLTSQSFPGKPKIIRCRSLEKETFSCWWKPGSDGGLPTNYTLFYSKDSEEKIYECPDYRTSGPNSCYFNRNYTNSWTTYNITVTATNEIGSNSSDPQYVDVTSIVQPGSPVNLTLETQRYANIMYLWAKWSPPLLADASSNHLYHYELRLKPEEKEEWETVPVGVQTQCKINRLNAGMRYVVQVRCMLDPGEWSEWSSERRILISGGLSPPEKPTITKCRSPEKETFTCWWKPGLDGGHPTNYTLLYSKEGEEQVYECPDYRTAGPNSCYFDKKHTSFWTVYNITVKATNEMGSNSSDPHYVDVTYIVQPDPPANVTLELKKPINRKPYLMLTWSPPPLADVRSGWLTLDYELRLKPEEGEEWETVFVGQQTQYKMFSLNPGKKYIVQIHCKPDHHGSWSEWSSENYIEIPNDFRVKDMIVWIVLGVLSSLICLIMSWTMVLKGYRMITFILPPVPGPKIKGIDTHLLETGKSEELLSALGCHGFPPTSDCEELLIEYLEVEDSEDHQLMPSHDSGRPSKNAKITLKETDRDSGRGSCDSPSLLSEKCRETCALPSALQIQDVRDVQAKKAGKRSWESYCVASERKALLFNNESAKSSTWPAVQLPNNQPPTFAYHSIVEANKITSTTTNMNVAAVLVENEERHQSLYSISETISGGMEKQEEMENLHSKTTQTTVQVRQNRSNEKLPFLNAALMDYVEVHKVRQDEEPTVLLKHKEKSGKIEKYTISGASKEYTKVSTVMNHNILVLMPDSRVLHTPTSQEEPAKETSQNPQQGQVETNMSYCMTAPRDCQREPSGSEYMDPSSFMPSFK.

An N-terminal signal peptide occupies residues 1-23 (MKQNLISSVQIILLLPLTTVGLT). Over 24–438 (SQSFPGKPKI…EIPNDFRVKD (415 aa)) the chain is Extracellular. 4 Fibronectin type-III domains span residues 30 to 128 (KPKI…VQPG), 129 to 232 (SPVN…SPPE), 233 to 331 (KPTI…VQPD), and 332 to 433 (PPAN…IPND). A disulfide bridge connects residues cysteine 36 and cysteine 46. A glycan (N-linked (GlcNAc...) asparagine) is linked at asparagine 59. The cysteines at positions 75 and 86 are disulfide-linked. 8 N-linked (GlcNAc...) asparagine glycosylation sites follow: asparagine 91, asparagine 100, asparagine 112, asparagine 132, asparagine 262, asparagine 303, asparagine 315, and asparagine 335. 2 residues coordinate Zn(2+): aspartate 414 and histidine 416. A WSXWS motif motif is present at residues 419 to 423 (WSEWS). The chain crosses the membrane as a helical span at residues 439–459 (MIVWIVLGVLSSLICLIMSWT). Over 460-831 (MVLKGYRMIT…DPSSFMPSFK (372 aa)) the chain is Cytoplasmic. A Box 1 motif motif is present at residues 471 to 479 (ILPPVPGPK). 2 disordered regions span residues 527–563 (HQLMPSHDSGRPSKNAKITLKETDRDSGRGSCDSPSL) and 776–831 (HTPT…PSFK). The span at 545–554 (TLKETDRDSG) shows a compositional bias: basic and acidic residues. Polar residues predominate over residues 777-803 (TPTSQEEPAKETSQNPQQGQVETNMSY).

The protein belongs to the type I cytokine receptor family. Type 1 subfamily.

Its subcellular location is the membrane. This is a receptor for the anterior pituitary hormone prolactin. The chain is Prolactin receptor (PRLR) from Meleagris gallopavo (Wild turkey).